Reading from the N-terminus, the 165-residue chain is 3-isopropylmalate dehydratase small subunit (165 aa).

The protein belongs to the LeuD family. LeuD type 2 subfamily. As to quaternary structure, heterodimer of LeuC and LeuD.

The enzyme catalyses (2R,3S)-3-isopropylmalate = (2S)-2-isopropylmalate. It functions in the pathway amino-acid biosynthesis; L-leucine biosynthesis; L-leucine from 3-methyl-2-oxobutanoate: step 2/4. Functionally, catalyzes the isomerization between 2-isopropylmalate and 3-isopropylmalate, via the formation of 2-isopropylmaleate. The protein is 3-isopropylmalate dehydratase small subunit of Saccharolobus islandicus (strain M.16.27) (Sulfolobus islandicus).